The sequence spans 126 residues: Thiocyanate hydrolase subunit alpha (126 aa).

In terms of assembly, heterododecamer consisting of 4 alpha, 4 beta, and 4 gamma subunits.

It catalyses the reaction thiocyanate + H2O + 2 H(+) = carbonyl sulfide + NH4(+). Its pathway is organosulfur degradation; thiocyanate degradation. Functionally, involved in the degradation of thiocyanate. In Thiobacillus thioparus, this protein is Thiocyanate hydrolase subunit alpha (scnA).